We begin with the raw amino-acid sequence, 1235 residues long: ATP-dependent helicase/nuclease subunit A (1235 aa).

One can recognise a UvrD-like helicase ATP-binding domain in the interval 12 to 482; the sequence is ALWTDDQWKA…IDLSQNFRSR (471 aa). An ATP-binding site is contributed by 33–40; it reads AAAGSGKT. In terms of domain architecture, UvrD-like helicase C-terminal spans 509 to 800; sequence AAELTLGASF…RMMTIHASKG (292 aa).

The protein belongs to the helicase family. AddA subfamily. Heterodimer of AddA and AddB/RexB. It depends on Mg(2+) as a cofactor.

It carries out the reaction Couples ATP hydrolysis with the unwinding of duplex DNA by translocating in the 3'-5' direction.. It catalyses the reaction ATP + H2O = ADP + phosphate + H(+). In terms of biological role, the heterodimer acts as both an ATP-dependent DNA helicase and an ATP-dependent, dual-direction single-stranded exonuclease. Recognizes the chi site generating a DNA molecule suitable for the initiation of homologous recombination. The AddA nuclease domain is required for chi fragment generation; this subunit has the helicase and 3' -&gt; 5' nuclease activities. This is ATP-dependent helicase/nuclease subunit A from Listeria innocua serovar 6a (strain ATCC BAA-680 / CLIP 11262).